A 342-amino-acid polypeptide reads, in one-letter code: S-adenosylmethionine:tRNA ribosyltransferase-isomerase (342 aa).

This sequence belongs to the QueA family. As to quaternary structure, monomer.

The protein resides in the cytoplasm. The enzyme catalyses 7-aminomethyl-7-carbaguanosine(34) in tRNA + S-adenosyl-L-methionine = epoxyqueuosine(34) in tRNA + adenine + L-methionine + 2 H(+). It functions in the pathway tRNA modification; tRNA-queuosine biosynthesis. Its function is as follows. Transfers and isomerizes the ribose moiety from AdoMet to the 7-aminomethyl group of 7-deazaguanine (preQ1-tRNA) to give epoxyqueuosine (oQ-tRNA). In Listeria monocytogenes serovar 1/2a (strain ATCC BAA-679 / EGD-e), this protein is S-adenosylmethionine:tRNA ribosyltransferase-isomerase.